We begin with the raw amino-acid sequence, 1693 residues long: uncharacterized protein (1693 aa).

16 WD repeats span residues 1008-1042, 1053-1083, 1094-1124, 1135-1165, 1176-1206, 1217-1247, 1258-1288, 1299-1329, 1340-1370, 1381-1411, 1422-1452, 1463-1493, 1504-1534, 1545-1575, 1586-1616, and 1627-1657; these read HHEGPVTVLRISPSMENTPPLVLTATTNGIAYLWS, GHQEAITALDWSADGQYFATASADHTVKLWQ, GHEDWVRSVHFSPHHQFLVTSGQDNTARIWN, GHADWVRNAEFNCHGQILLTASRDGTARLWD, GHTSWVRNAQFSPDGQWIVTCSADGTARLWD, GHQNWVNNALWSPDGQHIITSSSDGTARVWS, GHDHNIHGARFSLDGQKIVTYSTDNTARLWT, GHQKEVYDADFSADGRFVFTVSADQTARQWD, GHSHWVRNAHFNPKGDRLLTVSRDKTARLWT, DHQGWVREGQFSPDGQWIVTGSADKTAQLWN, GHQDAVLNVRFSPDSQYIVTASKDGTARVWN, HYEKNIFAAEFSADGQFIVTASDDNTAGIWE, GHEGPVYFAQFSADSRYILTASVDNTARIWD, GHQSIVYQARFSPEGNLIATVSADHTARLWD, GHQGLVGTVDWSPDGQMLVTASNDGTARLWD, and GHGNWVRSAEFSPDGRWVLTSSADGTAKLWP.

This is an uncharacterized protein from Synechocystis sp. (strain ATCC 27184 / PCC 6803 / Kazusa).